A 336-amino-acid polypeptide reads, in one-letter code: Myb family transcription factor PHL8 (336 aa).

The 61-residue stretch at Thr31–Ser91 folds into the HTH myb-type domain. Positions Pro62 to Arg87 form a DNA-binding region, H-T-H motif. The disordered stretch occupies residues Glu100–Glu134. Residues Val110–Arg120 are compositionally biased toward basic and acidic residues. A coiled-coil region spans residues Thr139 to Gln159. The LHEQLE signature appears at Leu152–Glu157.

Belongs to the MYB-CC family.

The protein resides in the nucleus. The polypeptide is Myb family transcription factor PHL8 (Arabidopsis thaliana (Mouse-ear cress)).